Reading from the N-terminus, the 87-residue chain is MSERNQRKVYQGRVVSDKMDKTITVVVETYKKHTLYGKRVKYSKKFKAHDENNQAKIGDIVKIMETRPLSATKRFRLVEVVEEAVII.

It belongs to the universal ribosomal protein uS17 family. In terms of assembly, part of the 30S ribosomal subunit.

One of the primary rRNA binding proteins, it binds specifically to the 5'-end of 16S ribosomal RNA. The chain is Small ribosomal subunit protein uS17 from Bacillus subtilis (strain 168).